Consider the following 151-residue polypeptide: MGRMHSNGKGISGSSLPYNRKPHAWTKPTASEVCETVCKLAKRGYTPSKIGSSLRDSLGVAQVKNVTGSKILRILKVNGLAPTIPEDLYHLIKKAVTINKHLQRARKDYDGKFHLRLVESRIHRLTRPYRKNGTLAPNWKYESNNASTLVA.

The interval 1 to 20 (MGRMHSNGKGISGSSLPYNR) is disordered.

This sequence belongs to the universal ribosomal protein uS15 family. As to quaternary structure, component of the small ribosomal subunit. Part of the small subunit (SSU) processome, composed of more than 70 proteins and the RNA chaperone small nucleolar RNA (snoRNA) U3.

The protein localises to the cytoplasm. The protein resides in the nucleus. Its subcellular location is the nucleolus. Functionally, component of the small ribosomal subunit. The ribosome is a large ribonucleoprotein complex responsible for the synthesis of proteins in the cell. Part of the small subunit (SSU) processome, first precursor of the small eukaryotic ribosomal subunit. During the assembly of the SSU processome in the nucleolus, many ribosome biogenesis factors, an RNA chaperone and ribosomal proteins associate with the nascent pre-rRNA and work in concert to generate RNA folding, modifications, rearrangements and cleavage as well as targeted degradation of pre-ribosomal RNA by the RNA exosome. The protein is Small ribosomal subunit protein uS15 (rps13) of Dictyostelium discoideum (Social amoeba).